Consider the following 364-residue polypeptide: Triacylglycerol lipase (364 aa).

Residues 1–44 (MARTMRSRVVAGAVACAMSIAPFAGTTAVMTLATTHAAMAATAP) form the signal peptide. One can recognise an AB hydrolase-1 domain in the interval 54–266 (PIILVHGLSG…AIQPTLSVFG (213 aa)). Substrate is bound at residue Leu61. Residue Ser131 is the Nucleophile of the active site. Gln132 is a binding site for substrate. A disulfide bond links Cys234 and Cys314. Asp286 serves as a coordination point for Ca(2+). Residues Asp308 and His330 each act as charge relay system in the active site. Ca(2+) contacts are provided by Asp332, Gln336, and Val340.

Belongs to the AB hydrolase superfamily. Pseudomonas lipase family. As to quaternary structure, monomer. Requires Ca(2+) as cofactor.

It is found in the secreted. It carries out the reaction a triacylglycerol + H2O = a diacylglycerol + a fatty acid + H(+). Inhibited by RC-(Rp,Sp)- and SC-(Rp,Sp)-1,2-dioctylcarbamoylglycero-3-O-p-nitrophenyl octylphosphonate. Also inhibited by diethyl-p-nitrophenylphosphate (E600). In terms of biological role, catalyzes the hydrolysis of triacylglycerol. It shows a preference for triacylglycerols with a chain length between 6 and 12 carbons. The polypeptide is Triacylglycerol lipase (Burkholderia cepacia (Pseudomonas cepacia)).